The chain runs to 384 residues: MAFLMKKKKFKFQTTFTLEELTAVPFVNGVLFCKVRLLDGGDFVSLSSREEVQENCVRWRKRFTFVCKMSANPATGLLDPCVFRVSVRKELKGGKAYSKLGFADLNLAEFAGSGSTVRCCLLEGYDTKNTRQDNSILKVTIGMFLLSGDPCFKTPPSTAKSISIPGQDSSLQLTCKGGGTSSGGSSTNSLTGSRPPKARPTILSSGLPEEPDQNLSSPEEVFHSGHSRNSSYASQQSKISGYSTEHSRSSSLSDLTHRRNTSTSSSASGGLGMTVEGPEGSEREHRPPEKPPRPPRPLHLSDRSFRRKKDSVESHPTWVDDTRIDADAIVEKIVQSQDFTDGSNTEDSNLRLFVSRDGSATLSGIQLATRVSSGVYEPVVIESH.

One can recognise a C2 NT-type domain in the interval 2–145 (AFLMKKKKFK…ILKVTIGMFL (144 aa)). Residues 129-138 (NTRQDNSILK) form a required for interaction with TNFRSF11A/RANK region. Residues 173 to 315 (LTCKGGGTSS…RRKKDSVESH (143 aa)) are disordered. The span at 183–193 (GGSSTNSLTGS) shows a compositional bias: low complexity. Over residues 227 to 254 (SRNSSYASQQSKISGYSTEHSRSSSLSD) the composition is skewed to polar residues. 2 stretches are compositionally biased toward basic and acidic residues: residues 280 to 292 (GSER…EKPP) and 299 to 315 (HLSD…VESH).

The protein belongs to the EEIG family. In terms of assembly, part of a complex composed of EEIG1, TNFRSF11A/RANK, PLCG2, GAB2, TEC and BTK; complex formation increases in the presence of TNFSF11/RANKL. Interacts with PRDM1/BLIMP1; following TNFSF11/RANKL stimulation in bone marrow-derived macrophages, the interaction promotes the binding of PRDM1/BLIMP1 to the gene promoter of IRF8.

The protein localises to the nucleus. The protein resides in the cytoplasm. It is found in the membrane raft. Its function is as follows. Key component of TNFSF11/RANKL- and TNF-induced osteoclastogenesis pathways, thereby mediates bone resorption in pathological bone loss conditions. Required for TNFSF11/RANKL-induced osteoclastogenesis via its interaction with TNFRSF11A/RANK, thereby facilitates the downsteam transcription of NFATC1 and activation of PLCG2. Facilitates recruitment of the transcriptional repressor PRDM1/BLIMP1 to the promoter of the anti-osteoclastogenesis gene IRF8, thereby resulting in transcription of osteoclast differentiation factors. May play a role in estrogen action. The chain is Early estrogen-induced gene 1 protein from Homo sapiens (Human).